A 232-amino-acid polypeptide reads, in one-letter code: Large ribosomal subunit protein uL1 (232 aa).

The protein belongs to the universal ribosomal protein uL1 family. As to quaternary structure, part of the 50S ribosomal subunit.

Functionally, binds directly to 23S rRNA. The L1 stalk is quite mobile in the ribosome, and is involved in E site tRNA release. Its function is as follows. Protein L1 is also a translational repressor protein, it controls the translation of the L11 operon by binding to its mRNA. The polypeptide is Large ribosomal subunit protein uL1 (Dinoroseobacter shibae (strain DSM 16493 / NCIMB 14021 / DFL 12)).